We begin with the raw amino-acid sequence, 256 residues long: Small ribosomal subunit protein eS1 (256 aa).

Ala2 carries the N-acetylalanine; partial modification.

The protein belongs to the eukaryotic ribosomal protein eS1 family. As to quaternary structure, component of the small ribosomal subunit. Mature ribosomes consist of a small (40S) and a large (60S) subunit. The 40S subunit contains about 33 different proteins and 1 molecule of RNA (18S). The 60S subunit contains about 49 different proteins and 3 molecules of RNA (25S, 5.8S and 5S).

The protein localises to the cytoplasm. This Sclerotinia sclerotiorum (strain ATCC 18683 / 1980 / Ss-1) (White mold) protein is Small ribosomal subunit protein eS1 (rps1).